The chain runs to 262 residues: Endoplasmic reticulum chaperone BiP (262 aa).

Position 8–11 (8–11 (GSTR)) interacts with ATP. The interval 53–63 (QDTGDLVLLDV) is interdomain linker. The substrate-binding (SBD) stretch occupies residues 64–144 (CPLTLGIETV…PRGVPQIEVT (81 aa)). An N6-succinyllysine modification is found at K91. Position 136 is an omega-N-methylarginine (R136). An O-AMP-threonine; alternate modification is found at T162. Phosphothreonine; alternate is present on T162. K229 carries the N6,N6,N6-trimethyllysine; by METTL21A; in vitro modification. Residue K229 is modified to N6,N6-dimethyllysine; alternate. Position 229 is an N6-methyllysine; alternate (K229). N6-methyllysine is present on K235.

This sequence belongs to the heat shock protein 70 family. As to quaternary structure, monomer and homooligomer; homooligomerization via the interdomain linker inactivates the chaperone activity and acts as a storage of HSPA5/BiP molecules. Interacts with DNAJC1 (via J domain). Component of an EIF2 complex at least composed of CELF1/CUGBP1, CALR, CALR3, EIF2S1, EIF2S2, HSP90B1 and HSPA5. Part of a large chaperone multiprotein complex comprising DNAJB11, HSP90B1, HSPA5, HYOU, PDIA2, PDIA4, PDIA6, PPIB, SDF2L1, UGGT1 and very small amounts of ERP29, but not, or at very low levels, CALR nor CANX. Interacts with TMEM132A and TRIM21. May form a complex with ERLEC1, OS9, SEL1L and SYVN1. Interacts with DNAJC10. Interacts with DNAJB9/ERdj4; leading to recruit HSPA5/BiP to ERN1/IRE1. Interacts with ERN1/IRE1 (via luminal domain); the interaction takes place following interaction with DNAJB9/ERdj4 and leads to inactivate ERN1/IRE1, the interaction also competitively inhibits ERN1 interaction with MANF. Interacts directly with MANF (via SAP domain); the interaction inhibits ATP binding to HSPA5/BiP and subsequent nucleotide exchange. Interacts with EIF2AK3/PERK (via luminal domain); interaction leads to inactivate EIF2AK3/PERK. Interacts with MX1. Interacts with METTL23. Interacts with CEMIP; the interaction induces calcium leakage from the endoplasmic reticulum and cell migration. Interacts with PCSK4 form; the interaction takes place in the endoplasmic reticulum. Interacts with CIPC. Interacts with CCDC88B (via C-terminus); the interaction opposes ERN1-mediated JNK activation, protecting against apoptosis. Interacts with INPP5K; necessary for INPP5K localization at the endoplasmic reticulum. Interacts with MANF; the interaction is direct. Interacts with LOXL2; leading to activate the ERN1/IRE1-XBP1 pathway of the unfolded protein response. Interacts with CLU under stressed condition; interaction increases CLU protein stability; facilitates its retrotranslocation and redistribution to the mitochondria; cooperatively suppress stress-induced apoptosis by stabilizing mitochondrial membrane integrity. Interacts with CCDC47. Interacts with CLN3. Interacts with ELAPOR1; may regulate the function of HSPA5 in apoptosis and cell proliferation. Interacts with CASP7. Interacts with ILDR2; the interaction stabilizes ILDR2 expression. Interacts with ADAM7. In unstressed cells, AMPylation at Thr-162 by FICD inactivates the chaperome activity: AMPylated form is locked in a relatively inert state and only weakly stimulated by J domain-containing proteins. In response to endoplasmic reticulum stress, de-AMPylation by the same protein, FICD, restores the chaperone activity.

It localises to the endoplasmic reticulum lumen. The protein resides in the melanosome. It is found in the cytoplasm. The protein localises to the cell surface. The catalysed reaction is ATP + H2O = ADP + phosphate + H(+). The chaperone activity is regulated by ATP-induced allosteric coupling of the nucleotide-binding (NBD) and substrate-binding (SBD) domains. In the ADP-bound and nucleotide-free (apo) states, the two domains have little interaction. In contrast, in the ATP-bound state the two domains are tightly coupled, which results in drastically accelerated kinetics in both binding and release of polypeptide substrates. J domain-containing co-chaperones (DNAJB9/ERdj4 or DNAJC10/ERdj5) stimulate the ATPase activity and are required for efficient substrate recognition by HSPA5/BiP. Homooligomerization inactivates participating HSPA5/BiP protomers and probably act as reservoirs to store HSPA5/BiP molecules when they are not needed by the cell. Its function is as follows. Endoplasmic reticulum chaperone that plays a key role in protein folding and quality control in the endoplasmic reticulum lumen. Involved in the correct folding of proteins and degradation of misfolded proteins via its interaction with DNAJC10/ERdj5, probably to facilitate the release of DNAJC10/ERdj5 from its substrate. Acts as a key repressor of the EIF2AK3/PERK and ERN1/IRE1-mediated unfolded protein response (UPR). In the unstressed endoplasmic reticulum, recruited by DNAJB9/ERdj4 to the luminal region of ERN1/IRE1, leading to disrupt the dimerization of ERN1/IRE1, thereby inactivating ERN1/IRE1. Also binds and inactivates EIF2AK3/PERK in unstressed cells. Accumulation of misfolded protein in the endoplasmic reticulum causes release of HSPA5/BiP from ERN1/IRE1 and EIF2AK3/PERK, allowing their homodimerization and subsequent activation. Plays an auxiliary role in post-translational transport of small presecretory proteins across endoplasmic reticulum (ER). May function as an allosteric modulator for SEC61 channel-forming translocon complex, likely cooperating with SEC62 to enable the productive insertion of these precursors into SEC61 channel. Appears to specifically regulate translocation of precursors having inhibitory residues in their mature region that weaken channel gating. May also play a role in apoptosis and cell proliferation. The chain is Endoplasmic reticulum chaperone BiP from Sus scrofa (Pig).